Reading from the N-terminus, the 298-residue chain is Probable endonuclease 4 (298 aa).

Residues H69, H111, E146, D180, H183, H215, D228, H230, and E260 each coordinate Zn(2+).

This sequence belongs to the AP endonuclease 2 family. The cofactor is Zn(2+).

The catalysed reaction is Endonucleolytic cleavage to 5'-phosphooligonucleotide end-products.. Its function is as follows. Endonuclease IV plays a role in DNA repair. It cleaves phosphodiester bonds at apurinic or apyrimidinic (AP) sites, generating a 3'-hydroxyl group and a 5'-terminal sugar phosphate. The sequence is that of Probable endonuclease 4 from Bacillus cytotoxicus (strain DSM 22905 / CIP 110041 / 391-98 / NVH 391-98).